The chain runs to 397 residues: Tryptophan synthase beta chain (397 aa).

Position 91 is an N6-(pyridoxal phosphate)lysine (K91).

This sequence belongs to the TrpB family. In terms of assembly, tetramer of two alpha and two beta chains. Pyridoxal 5'-phosphate is required as a cofactor.

It carries out the reaction (1S,2R)-1-C-(indol-3-yl)glycerol 3-phosphate + L-serine = D-glyceraldehyde 3-phosphate + L-tryptophan + H2O. It functions in the pathway amino-acid biosynthesis; L-tryptophan biosynthesis; L-tryptophan from chorismate: step 5/5. In terms of biological role, the beta subunit is responsible for the synthesis of L-tryptophan from indole and L-serine. The polypeptide is Tryptophan synthase beta chain (Bacillus cereus (strain AH187)).